Here is a 311-residue protein sequence, read N- to C-terminus: Aspartate carbamoyltransferase catalytic subunit (311 aa).

The carbamoyl phosphate site is built by Arg59 and Thr60. Lys87 serves as a coordination point for L-aspartate. Residues Arg109, His139, and Gln142 each contribute to the carbamoyl phosphate site. The L-aspartate site is built by Arg172 and Arg224. Carbamoyl phosphate-binding residues include Ala265 and Pro266.

This sequence belongs to the aspartate/ornithine carbamoyltransferase superfamily. ATCase family. Heterododecamer (2C3:3R2) of six catalytic PyrB chains organized as two trimers (C3), and six regulatory PyrI chains organized as three dimers (R2).

It carries out the reaction carbamoyl phosphate + L-aspartate = N-carbamoyl-L-aspartate + phosphate + H(+). Its pathway is pyrimidine metabolism; UMP biosynthesis via de novo pathway; (S)-dihydroorotate from bicarbonate: step 2/3. Functionally, catalyzes the condensation of carbamoyl phosphate and aspartate to form carbamoyl aspartate and inorganic phosphate, the committed step in the de novo pyrimidine nucleotide biosynthesis pathway. The sequence is that of Aspartate carbamoyltransferase catalytic subunit from Streptococcus pyogenes serotype M4 (strain MGAS10750).